Reading from the N-terminus, the 418-residue chain is Actin-like protein C08B11.6 (418 aa).

The protein belongs to the actin family. ARP6 subfamily.

The protein resides in the cytoplasm. The protein localises to the cytoskeleton. The protein is Actin-like protein C08B11.6 (arp-6) of Caenorhabditis elegans.